The chain runs to 388 residues: 1-deoxy-D-xylulose 5-phosphate reductoisomerase (388 aa).

The NADPH site is built by Thr10, Gly11, Ser12, Ile13, Asn37, and Asn121. Residue Lys122 coordinates 1-deoxy-D-xylulose 5-phosphate. Glu123 lines the NADPH pocket. Asp147 is a Mn(2+) binding site. 1-deoxy-D-xylulose 5-phosphate is bound by residues Ser148, Glu149, Ser173, and His196. Residue Glu149 coordinates Mn(2+). Gly202 is an NADPH binding site. Positions 209, 214, 215, and 218 each coordinate 1-deoxy-D-xylulose 5-phosphate. Glu218 contributes to the Mn(2+) binding site.

Belongs to the DXR family. It depends on Mg(2+) as a cofactor. The cofactor is Mn(2+).

It catalyses the reaction 2-C-methyl-D-erythritol 4-phosphate + NADP(+) = 1-deoxy-D-xylulose 5-phosphate + NADPH + H(+). Its pathway is isoprenoid biosynthesis; isopentenyl diphosphate biosynthesis via DXP pathway; isopentenyl diphosphate from 1-deoxy-D-xylulose 5-phosphate: step 1/6. In terms of biological role, catalyzes the NADPH-dependent rearrangement and reduction of 1-deoxy-D-xylulose-5-phosphate (DXP) to 2-C-methyl-D-erythritol 4-phosphate (MEP). The protein is 1-deoxy-D-xylulose 5-phosphate reductoisomerase of Lachnoclostridium phytofermentans (strain ATCC 700394 / DSM 18823 / ISDg) (Clostridium phytofermentans).